The chain runs to 145 residues: Large ribosomal subunit protein eL32 (145 aa).

The protein belongs to the eukaryotic ribosomal protein eL32 family.

The chain is Large ribosomal subunit protein eL32 (rpl32e) from Aeropyrum pernix (strain ATCC 700893 / DSM 11879 / JCM 9820 / NBRC 100138 / K1).